Reading from the N-terminus, the 579-residue chain is Acyl-coenzyme A synthetase ACSM5, mitochondrial (579 aa).

A mitochondrion-targeting transit peptide spans Met-1 to Pro-26. An N6-acetyllysine; alternate modification is found at Lys-97. N6-succinyllysine; alternate is present on Lys-97. Lys-152 is modified (N6-acetyllysine). Thr-230 to Lys-238 provides a ligand contact to ATP. The residue at position 303 (Lys-303) is an N6-acetyllysine; alternate. Lys-303 is modified (N6-succinyllysine; alternate). ATP is bound by residues Glu-368 to Ser-373, Asp-455, Arg-470, and Lys-566.

This sequence belongs to the ATP-dependent AMP-binding enzyme family. Requires Mg(2+) as cofactor. Mn(2+) is required as a cofactor. As to expression, detected in kidney and liver.

The protein resides in the mitochondrion matrix. It carries out the reaction a medium-chain fatty acid + ATP + CoA = a medium-chain fatty acyl-CoA + AMP + diphosphate. Catalyzes the activation of fatty acids by CoA to produce an acyl-CoA, the first step in fatty acid metabolism. The protein is Acyl-coenzyme A synthetase ACSM5, mitochondrial (ACSM5) of Homo sapiens (Human).